Reading from the N-terminus, the 31-residue chain is Cyclotide vico-B (31 aa).

Residues 1-31 (GSIPCAESCVYIPCITGIAGCSCKNKVCYYN) constitute a cross-link (cyclopeptide (Gly-Asn)). Cystine bridges form between C5-C21, C9-C23, and C14-C28.

This sequence belongs to the cyclotide family. Bracelet subfamily. This is a cyclic peptide.

Functionally, probably participates in a plant defense mechanism. The sequence is that of Cyclotide vico-B from Viola cotyledon (Violeta).